Reading from the N-terminus, the 20-residue chain is Cytochrome c oxidase subunit 8B, mitochondrial (20 aa).

It belongs to the cytochrome c oxidase VIII family. Component of the cytochrome c oxidase (complex IV, CIV), a multisubunit enzyme composed of 14 subunits. The complex is composed of a catalytic core of 3 subunits MT-CO1, MT-CO2 and MT-CO3, encoded in the mitochondrial DNA, and 11 supernumerary subunits COX4I, COX5A, COX5B, COX6A, COX6B, COX6C, COX7A, COX7B, COX7C, COX8 and NDUFA4, which are encoded in the nuclear genome. The complex exists as a monomer or a dimer and forms supercomplexes (SCs) in the inner mitochondrial membrane with NADH-ubiquinone oxidoreductase (complex I, CI) and ubiquinol-cytochrome c oxidoreductase (cytochrome b-c1 complex, complex III, CIII), resulting in different assemblies (supercomplex SCI(1)III(2)IV(1) and megacomplex MCI(2)III(2)IV(2)).

The protein resides in the mitochondrion inner membrane. It functions in the pathway energy metabolism; oxidative phosphorylation. Component of the cytochrome c oxidase, the last enzyme in the mitochondrial electron transport chain which drives oxidative phosphorylation. The respiratory chain contains 3 multisubunit complexes succinate dehydrogenase (complex II, CII), ubiquinol-cytochrome c oxidoreductase (cytochrome b-c1 complex, complex III, CIII) and cytochrome c oxidase (complex IV, CIV), that cooperate to transfer electrons derived from NADH and succinate to molecular oxygen, creating an electrochemical gradient over the inner membrane that drives transmembrane transport and the ATP synthase. Cytochrome c oxidase is the component of the respiratory chain that catalyzes the reduction of oxygen to water. Electrons originating from reduced cytochrome c in the intermembrane space (IMS) are transferred via the dinuclear copper A center (CU(A)) of subunit 2 and heme A of subunit 1 to the active site in subunit 1, a binuclear center (BNC) formed by heme A3 and copper B (CU(B)). The BNC reduces molecular oxygen to 2 water molecules using 4 electrons from cytochrome c in the IMS and 4 protons from the mitochondrial matrix. This chain is Cytochrome c oxidase subunit 8B, mitochondrial, found in Thunnus obesus (Bigeye tuna).